The primary structure comprises 230 residues: DNA ADP-ribosyl transferase (230 aa).

The 205-residue stretch at 26-230 folds into the DarT domain; that stretch reads WIVWHFTHAD…KYVIKPGMYY (205 aa). NAD(+) is bound by residues 30–32, glycine 39, leucine 47, and arginine 67; that span reads HFT. Arginine 67 functions as the Proton acceptor in the catalytic mechanism. The active site involves glutamate 183.

This sequence belongs to the DarT ADP-ribosyltransferase family. In terms of assembly, interacts with cognate antitoxin DarG (via C-terminus); this heterodimeric complex neutralizes the toxic effect of DarT by preventing ssDNA binding to DarT and consequently inactivating the toxin by direct protein-protein interactions.

It catalyses the reaction a thymidine in DNA + NAD(+) = an N-(ADP-alpha-D-ribosyl)-thymidine in DNA + nicotinamide + H(+). In terms of biological role, toxic component of the hybrid type II/IV toxin-antitoxin (TA) system DarTG, which plays a crucial role in controlling bacterial growth and bacteriophage infection. ADP-ribosylates ssDNA, preferentially in the motif TTTW. In case of phage infection, DarT toxin ADP-ribosylates DNA, which inhibits both viral DNA and RNA synthesis and leads to abortive infection. Its toxic effect is neutralized by cognate antitoxin DarG. The sequence is that of DNA ADP-ribosyl transferase from Mycobacterium bovis (strain BCG / Pasteur 1173P2).